Reading from the N-terminus, the 447-residue chain is Chromosomal replication initiator protein DnaA (447 aa).

The interval 1–70 (MQDFWSKAMD…EEILSEQLGE (70 aa)) is domain I, interacts with DnaA modulators. The segment at 70-110 (EPVTLLFAADPALEKPVASKTQTVTPVQSGGETGDQENFHS) is domain II. Positions 87-109 (ASKTQTVTPVQSGGETGDQENFH) are disordered. Residues 88-99 (SKTQTVTPVQSG) show a composition bias toward polar residues. The segment at 111 to 327 (GLDPRYTFDS…GALIRVSAYA (217 aa)) is domain III, AAA+ region. ATP contacts are provided by Gly-155, Gly-157, Lys-158, and Thr-159. A domain IV, binds dsDNA region spans residues 328–447 (SLTGKPITMA…LASLKSMLQK (120 aa)).

This sequence belongs to the DnaA family. Oligomerizes as a right-handed, spiral filament on DNA at oriC.

The protein resides in the cytoplasm. Its function is as follows. Plays an essential role in the initiation and regulation of chromosomal replication. ATP-DnaA binds to the origin of replication (oriC) to initiate formation of the DNA replication initiation complex once per cell cycle. Binds the DnaA box (a 9 base pair repeat at the origin) and separates the double-stranded (ds)DNA. Forms a right-handed helical filament on oriC DNA; dsDNA binds to the exterior of the filament while single-stranded (ss)DNA is stabiized in the filament's interior. The ATP-DnaA-oriC complex binds and stabilizes one strand of the AT-rich DNA unwinding element (DUE), permitting loading of DNA polymerase. After initiation quickly degrades to an ADP-DnaA complex that is not apt for DNA replication. Binds acidic phospholipids. The chain is Chromosomal replication initiator protein DnaA from Magnetococcus marinus (strain ATCC BAA-1437 / JCM 17883 / MC-1).